The following is a 79-amino-acid chain: Conotoxin Vi6.9 (79 aa).

Residues 1–22 (MKLTCMVIITVLFLTASQLITA) form the signal peptide. A propeptide spanning residues 23–47 (DYSRDQRQYRAVRLGDEMRNFKGAR) is cleaved from the precursor. 3 cysteine pairs are disulfide-bonded: C49–C62, C56–C67, and C61–C77. 2 positions are modified to 4-hydroxyproline: P60 and P63.

The protein belongs to the conotoxin O1 superfamily. As to expression, expressed by the venom duct.

It is found in the secreted. Ion channel inhibitor that inhibits the increase in intracellular calcium upon depolarization in DRG neurons. In vivo, both intraperitoneal and intracranial injections into mice induce hyperactivity. The sequence is that of Conotoxin Vi6.9 from Conus virgo (Virgin cone).